Here is a 305-residue protein sequence, read N- to C-terminus: UDP-3-O-acyl-N-acetylglucosamine deacetylase (305 aa).

Zn(2+) is bound by residues H79, H238, and D242. Catalysis depends on H265, which acts as the Proton donor.

This sequence belongs to the LpxC family. It depends on Zn(2+) as a cofactor.

It catalyses the reaction a UDP-3-O-[(3R)-3-hydroxyacyl]-N-acetyl-alpha-D-glucosamine + H2O = a UDP-3-O-[(3R)-3-hydroxyacyl]-alpha-D-glucosamine + acetate. It functions in the pathway glycolipid biosynthesis; lipid IV(A) biosynthesis; lipid IV(A) from (3R)-3-hydroxytetradecanoyl-[acyl-carrier-protein] and UDP-N-acetyl-alpha-D-glucosamine: step 2/6. Its function is as follows. Catalyzes the hydrolysis of UDP-3-O-myristoyl-N-acetylglucosamine to form UDP-3-O-myristoylglucosamine and acetate, the committed step in lipid A biosynthesis. This chain is UDP-3-O-acyl-N-acetylglucosamine deacetylase, found in Salmonella paratyphi A (strain ATCC 9150 / SARB42).